Consider the following 206-residue polypeptide: Small ribosomal subunit protein uS4 (206 aa).

Residues 96–160 (CRLDNVVYRM…AQLRIVQALE (65 aa)) enclose the S4 RNA-binding domain.

The protein belongs to the universal ribosomal protein uS4 family. As to quaternary structure, part of the 30S ribosomal subunit. Contacts protein S5. The interaction surface between S4 and S5 is involved in control of translational fidelity.

One of the primary rRNA binding proteins, it binds directly to 16S rRNA where it nucleates assembly of the body of the 30S subunit. In terms of biological role, with S5 and S12 plays an important role in translational accuracy. In Pseudomonas putida (strain GB-1), this protein is Small ribosomal subunit protein uS4.